The following is a 59-amino-acid chain: MAVQQNKKSPSKRDMHRAHDFLTAPATAVEATTGEAHLRHHISPNGYYRGRKVVKTNND.

This sequence belongs to the bacterial ribosomal protein bL32 family.

In Polynucleobacter necessarius subsp. necessarius (strain STIR1), this protein is Large ribosomal subunit protein bL32.